The primary structure comprises 153 residues: MDYCNKKHTAEEYVKISDNNYVPFPEAFSDGGITWQLLHSSPETSSWTAIFNCPAGSSFASHIHAGPGEYFLTKGKMEVRGGEQEGGSTAYAPSYGFESSGALHGKTFFPVESQFYMTFLGPLNFIDDNGKVIASIGWAEAQGAWLATKNEAA.

Homotetramer. It depends on Fe cation as a cofactor.

The catalysed reaction is acetylacetone + O2 = methylglyoxal + acetate + H(+). It functions in the pathway xenobiotic degradation; acetylacetone degradation. Functionally, cleaves acetylacetone to equimolar amounts of methylglyoxal and acetate, consuming one equivalent of molecular oxygen. The polypeptide is Acetylacetone-cleaving enzyme (dke1) (Acinetobacter johnsonii).